A 274-amino-acid chain; its full sequence is Undecaprenyl-diphosphatase (274 aa).

A run of 7 helical transmembrane segments spans residues 4-24 (PLFV…FLPI), 41-61 (DATS…AVCW), 83-103 (FVGL…MFHS), 108-128 (LLFN…LILW), 184-204 (AAEF…VYDL), 218-238 (VFAI…KAFI), and 246-266 (FIAF…TWQL).

This sequence belongs to the UppP family.

It is found in the cell inner membrane. The catalysed reaction is di-trans,octa-cis-undecaprenyl diphosphate + H2O = di-trans,octa-cis-undecaprenyl phosphate + phosphate + H(+). In terms of biological role, catalyzes the dephosphorylation of undecaprenyl diphosphate (UPP). Confers resistance to bacitracin. This is Undecaprenyl-diphosphatase from Aromatoleum aromaticum (strain DSM 19018 / LMG 30748 / EbN1) (Azoarcus sp. (strain EbN1)).